A 93-amino-acid chain; its full sequence is Sec-independent protein translocase protein TatA (93 aa).

The chain crosses the membrane as a helical span at residues 1 to 21; it reads MGNVFSGWHLLVILLVIVLLF. The tract at residues 49 to 93 is disordered; that stretch reads DITRSQDGHPDSQGNFAESASSVPFVKSEKQSEKRASVTEAKKSK. The segment covering 60 to 70 has biased composition (polar residues); sequence SQGNFAESASS. Basic and acidic residues predominate over residues 75-93; that stretch reads KSEKQSEKRASVTEAKKSK.

This sequence belongs to the TatA/E family. As to quaternary structure, the Tat system comprises two distinct complexes: a TatABC complex, containing multiple copies of TatA, TatB and TatC subunits, and a separate TatA complex, containing only TatA subunits. Substrates initially bind to the TatABC complex, which probably triggers association of the separate TatA complex to form the active translocon.

Its subcellular location is the cell membrane. Part of the twin-arginine translocation (Tat) system that transports large folded proteins containing a characteristic twin-arginine motif in their signal peptide across membranes. TatA could form the protein-conducting channel of the Tat system. The protein is Sec-independent protein translocase protein TatA of Tropheryma whipplei (strain TW08/27) (Whipple's bacillus).